The sequence spans 103 residues: Small ribosomal subunit protein uS10 (103 aa).

This sequence belongs to the universal ribosomal protein uS10 family. As to quaternary structure, part of the 30S ribosomal subunit.

Involved in the binding of tRNA to the ribosomes. The sequence is that of Small ribosomal subunit protein uS10 from Shewanella loihica (strain ATCC BAA-1088 / PV-4).